Here is a 1571-residue protein sequence, read N- to C-terminus: Phosphatidylinositol 3-kinase 1 (1571 aa).

Positions 1–73 (MNSIESSSND…NNDNNNNNNN (73 aa)) are enriched in low complexity. 3 disordered regions span residues 1–119 (MNSI…HVNN), 157–195 (GYDV…RTRN), and 283–430 (NSKL…IIKR). Basic and acidic residues predominate over residues 74–85 (IDKKRKDSKNKQ). Residues 101-119 (NSNDSNCSSGSSSGGHVNN) are compositionally biased toward low complexity. The span at 283 to 292 (NSKLDTEEKP) shows a compositional bias: basic and acidic residues. A compositionally biased stretch (low complexity) spans 294 to 324 (TTTTTTTTTSTSISTSTPTTTTTTTTNTSTT). Residues 325 to 337 (NDITIKPKTSPTK) are compositionally biased toward polar residues. 2 stretches are compositionally biased toward low complexity: residues 360-382 (KVST…PTGK) and 405-424 (NNTN…NNNN). In terms of domain architecture, PI3K-ABD spans 530–627 (IKTSFNILFL…IPKLKVIEKS (98 aa)). One can recognise a PI3K-RBD domain in the interval 700 to 789 (GNKILISIFL…GTKPQLTLIQ (90 aa)). In terms of domain architecture, C2 PI3K-type spans 851-1020 (IKKPFRVKVM…GLTLEFEEFN (170 aa)). The PIK helical domain maps to 1040–1216 (QPPTNINSNE…GILLESYLYA (177 aa)). One can recognise a PI3K/PI4K catalytic domain in the interval 1280 to 1558 (IINKSKYMDS…LIHESLATKT (279 aa)). The G-loop stretch occupies residues 1286 to 1292 (YMDSKKL). Positions 1424–1432 (GIGDRHNDN) are catalytic loop. Residues 1443–1469 (HIDFGHFLGNYKKKFGFKRERAPFVFT) are activation loop.

It belongs to the PI3/PI4-kinase family.

The catalysed reaction is a 1,2-diacyl-sn-glycero-3-phospho-(1D-myo-inositol) + ATP = a 1,2-diacyl-sn-glycero-3-phospho-(1D-myo-inositol-3-phosphate) + ADP + H(+). This chain is Phosphatidylinositol 3-kinase 1 (pikA), found in Dictyostelium discoideum (Social amoeba).